The primary structure comprises 579 residues: Salivary alpha-glucosidase (579 aa).

The N-terminal stretch at 1–18 is a signal peptide; the sequence is MKIFVPLLSFLLAGLTTG. 6 residues coordinate Ca(2+): aspartate 37, aspartate 39, aspartate 41, isoleucine 43, aspartate 45, and asparagine 118. Residues asparagine 118 and asparagine 151 are each glycosylated (N-linked (GlcNAc...) asparagine). Aspartate 189 lines the Ca(2+) pocket. Residue aspartate 219 is the Nucleophile of the active site. 3 residues coordinate Ca(2+): tyrosine 223, leucine 224, and glutamate 226. N-linked (GlcNAc...) asparagine glycosylation is present at asparagine 282. Catalysis depends on glutamate 290, which acts as the Proton donor. Asparagine 304, asparagine 325, and asparagine 401 each carry an N-linked (GlcNAc...) asparagine glycan. Residue asparagine 325 participates in N-acetyl-beta-D-glucosamine binding.

Belongs to the glycosyl hydrolase 13 family. Saliva (at protein level). Proximal lateral lobes of the salivary gland (at protein level).

Its subcellular location is the secreted. The enzyme catalyses Hydrolysis of terminal, non-reducing (1-&gt;4)-linked alpha-D-glucose residues with release of alpha-D-glucose.. Functionally, functions as a glucosidase that shows high activity toward sucrose, a major component of nectar. Assists the mosquito in its sugar-feeding capabilities. This Aedes aegypti (Yellowfever mosquito) protein is Salivary alpha-glucosidase.